The following is a 466-amino-acid chain: Probable WRKY transcription factor 32 (466 aa).

2 disordered regions span residues 1–45 (MEED…MEDL) and 140–166 (SVPTKQEQRSDSPVVNRLSVTPVPRTP). Residues 8–38 (DEAKTYTVEKSEKVEPEKDGLSQFRDEEKSL) are compositionally biased toward basic and acidic residues. A DNA-binding region (WRKY 1) is located at residues 162 to 226 (VPRTPARDGY…NKGLHTHEPP (65 aa)). Cys-193, Cys-198, His-221, and His-223 together coordinate Zn(2+). The segment at 284-317 (HCENEAVEEPEPKRRLKKDNSQSSDSVSKPGKKN) is disordered. The segment at residues 325-390 (GDVGICGDGY…YKGVHNHDMP (66 aa)) is a DNA-binding region (WRKY 2). Zn(2+)-binding residues include Cys-356, Cys-361, His-385, and His-387. A disordered region spans residues 410 to 439 (TSMRTRTDDQVNIPTSSQCSVGRESEKQSK). Positions 419 to 429 (QVNIPTSSQCS) are enriched in polar residues.

The protein belongs to the WRKY group I family.

It is found in the nucleus. Functionally, transcription factor. Interacts specifically with the W box (5'-(T)TGAC[CT]-3'), a frequently occurring elicitor-responsive cis-acting element. The chain is Probable WRKY transcription factor 32 (WRKY32) from Arabidopsis thaliana (Mouse-ear cress).